The primary structure comprises 247 residues: 4-hydroxy-tetrahydrodipicolinate reductase (247 aa).

Residues 12–17, 78–80, and 102–105 contribute to the NAD(+) site; these read GITGRM, GTT, and AANF. Histidine 136 serves as the catalytic Proton donor/acceptor. Position 137 (histidine 137) interacts with (S)-2,3,4,5-tetrahydrodipicolinate. Lysine 140 functions as the Proton donor in the catalytic mechanism. 146 to 147 is a (S)-2,3,4,5-tetrahydrodipicolinate binding site; the sequence is GT.

Belongs to the DapB family.

It is found in the cytoplasm. The enzyme catalyses (S)-2,3,4,5-tetrahydrodipicolinate + NAD(+) + H2O = (2S,4S)-4-hydroxy-2,3,4,5-tetrahydrodipicolinate + NADH + H(+). It catalyses the reaction (S)-2,3,4,5-tetrahydrodipicolinate + NADP(+) + H2O = (2S,4S)-4-hydroxy-2,3,4,5-tetrahydrodipicolinate + NADPH + H(+). It participates in amino-acid biosynthesis; L-lysine biosynthesis via DAP pathway; (S)-tetrahydrodipicolinate from L-aspartate: step 4/4. In terms of biological role, catalyzes the conversion of 4-hydroxy-tetrahydrodipicolinate (HTPA) to tetrahydrodipicolinate. The polypeptide is 4-hydroxy-tetrahydrodipicolinate reductase (Acidiphilium cryptum (strain JF-5)).